The following is a 435-amino-acid chain: Cysteine--tRNA ligase (435 aa).

C24 contacts Zn(2+). The 'HIGH' region signature appears at P26–N36. The Zn(2+) site is built by C202, H228, and E232. Residues K260–S264 carry the 'KMSKS' region motif. K263 provides a ligand contact to ATP.

Belongs to the class-I aminoacyl-tRNA synthetase family. In terms of assembly, monomer. Requires Zn(2+) as cofactor.

It is found in the cytoplasm. It carries out the reaction tRNA(Cys) + L-cysteine + ATP = L-cysteinyl-tRNA(Cys) + AMP + diphosphate. The polypeptide is Cysteine--tRNA ligase (Mycoplasmoides gallisepticum (strain R(low / passage 15 / clone 2)) (Mycoplasma gallisepticum)).